The following is a 416-amino-acid chain: Phosphatidylinositol 5-phosphate 4-kinase type-2 beta (416 aa).

N-acetylserine is present on Ser-2. Phosphothreonine is present on Thr-8. Position 19 is a phosphoserine (Ser-19). A PIPK domain is found at 38-415; that stretch reads ASEPILSVLM…RFNEFMSNIL (378 aa). A required for interaction with PIP5K1A region spans residues 64–70; it reads VMLMPDD. Residues Lys-94 and Lys-150 each carry the N6-acetyllysine modification. ATP-binding positions include 202-204 and Lys-214; that span reads RNV. GTP contacts are provided by residues 203-204 and Lys-214; that span reads NV. Phosphothreonine is present on Thr-322. At Ser-326 the chain carries Phosphoserine. Asp-369 is a binding site for GTP.

In terms of assembly, homodimer. Binds TNFRSF1A. Interacts with PIP4K2A; the interaction suppresses ubiquitination by the SPOP/CUL3 complex. In terms of processing, ubiquitinated by the SPOP/CUL3 complex. Ubiquitination is stimulated by PtdIns5P levels. Phosphorylated on serine residues. As to expression, highly expressed in brain, heart, pancreas, skeletal muscle and kidney. Detected at lower levels in placenta, lung and liver.

The protein resides in the endoplasmic reticulum membrane. It is found in the cell membrane. The protein localises to the nucleus. It localises to the cytoplasm. It catalyses the reaction a 1,2-diacyl-sn-glycero-3-phospho-(1D-myo-inositol-5-phosphate) + ATP = a 1,2-diacyl-sn-glycero-3-phospho-(1D-myo-inositol-4,5-bisphosphate) + ADP + H(+). The catalysed reaction is 1,2-dihexadecanoyl-sn-glycero-3-phospho-(1D-myo-inositol-5-phosphate) + ATP = 1,2-dihexadecanoyl-sn-glycero-3-phospho-(1D-myo-inositol-4,5-bisphosphate) + ADP + H(+). It carries out the reaction 1,2-dihexadecanoyl-sn-glycero-3-phospho-(1D-myo-inositol-5-phosphate) + GTP = 1,2-dihexadecanoyl-sn-glycero-3-phospho-(1D-myo-inositol-4,5-bisphosphate) + GDP + H(+). Its function is as follows. Participates in the biosynthesis of phosphatidylinositol 4,5-bisphosphate. Preferentially utilizes GTP, rather than ATP, for PI(5)P phosphorylation and its activity reflects changes in direct proportion to the physiological GTP concentration. Its GTP-sensing activity is critical for metabolic adaptation. PIP4Ks negatively regulate insulin signaling through a catalytic-independent mechanism. They interact with PIP5Ks and suppress PIP5K-mediated PtdIns(4,5)P2 synthesis and insulin-dependent conversion to PtdIns(3,4,5)P3. The polypeptide is Phosphatidylinositol 5-phosphate 4-kinase type-2 beta (Homo sapiens (Human)).